The sequence spans 217 residues: ATP phosphoribosyltransferase (217 aa).

Belongs to the ATP phosphoribosyltransferase family. Short subfamily. In terms of assembly, heteromultimer composed of HisG and HisZ subunits.

It is found in the cytoplasm. It catalyses the reaction 1-(5-phospho-beta-D-ribosyl)-ATP + diphosphate = 5-phospho-alpha-D-ribose 1-diphosphate + ATP. Its pathway is amino-acid biosynthesis; L-histidine biosynthesis; L-histidine from 5-phospho-alpha-D-ribose 1-diphosphate: step 1/9. Its function is as follows. Catalyzes the condensation of ATP and 5-phosphoribose 1-diphosphate to form N'-(5'-phosphoribosyl)-ATP (PR-ATP). Has a crucial role in the pathway because the rate of histidine biosynthesis seems to be controlled primarily by regulation of HisG enzymatic activity. This Neisseria meningitidis serogroup A / serotype 4A (strain DSM 15465 / Z2491) protein is ATP phosphoribosyltransferase (hisG).